Here is a 192-residue protein sequence, read N- to C-terminus: NADH dehydrogenase [ubiquinone] iron-sulfur protein 3 (192 aa).

It belongs to the complex I 30 kDa subunit family. As to quaternary structure, complex I is composed of about 45 different subunits. This is a component of the iron-sulfur (IP) fragment of the enzyme.

It is found in the mitochondrion inner membrane. It catalyses the reaction a ubiquinone + NADH + 5 H(+)(in) = a ubiquinol + NAD(+) + 4 H(+)(out). In terms of biological role, core subunit of the mitochondrial membrane respiratory chain NADH dehydrogenase (Complex I) that is believed to belong to the minimal assembly required for catalysis. Complex I functions in the transfer of electrons from NADH to the respiratory chain. The immediate electron acceptor for the enzyme is believed to be ubiquinone. In Beta trigyna (Caucasian wild beet), this protein is NADH dehydrogenase [ubiquinone] iron-sulfur protein 3 (NAD9).